Here is a 178-residue protein sequence, read N- to C-terminus: Large ribosomal subunit protein uL6 (178 aa).

It belongs to the universal ribosomal protein uL6 family. Part of the 50S ribosomal subunit.

This protein binds to the 23S rRNA, and is important in its secondary structure. It is located near the subunit interface in the base of the L7/L12 stalk, and near the tRNA binding site of the peptidyltransferase center. In Leuconostoc mesenteroides subsp. mesenteroides (strain ATCC 8293 / DSM 20343 / BCRC 11652 / CCM 1803 / JCM 6124 / NCDO 523 / NBRC 100496 / NCIMB 8023 / NCTC 12954 / NRRL B-1118 / 37Y), this protein is Large ribosomal subunit protein uL6.